The following is a 43-amino-acid chain: Protein PsbN (43 aa).

Residues 5-27 traverse the membrane as a helical segment; sequence NLVAIFVSCLLVSLTGYALYTSF.

It belongs to the PsbN family.

Its subcellular location is the plastid. The protein resides in the chloroplast thylakoid membrane. In terms of biological role, may play a role in photosystem I and II biogenesis. In Ephedra sinica (Chinese ephedra), this protein is Protein PsbN.